The following is a 391-amino-acid chain: Glycerophosphocholine acyltransferase 1 (391 aa).

The Cytoplasmic segment spans residues methionine 1–serine 66. The helical transmembrane segment at phenylalanine 67–leucine 87 threads the bilayer. The Lumenal segment spans residues glycine 88–glutamine 92. A helical membrane pass occupies residues aspartate 93–tyrosine 113. Topologically, residues arginine 114–histidine 119 are cytoplasmic. Residues tyrosine 120–tyrosine 140 traverse the membrane as a helical segment. Residues proline 141–glutamate 144 lie on the Lumenal side of the membrane. Residues lysine 145 to tryptophan 165 form a helical membrane-spanning segment. Residues arginine 166–serine 172 are Cytoplasmic-facing. Residues serine 173–isoleucine 193 traverse the membrane as a helical segment. Residues arginine 194–threonine 226 are Lumenal-facing. The helical transmembrane segment at tryptophan 227–valine 247 threads the bilayer. At asparagine 248–methionine 294 the chain is on the cytoplasmic side. The helical transmembrane segment at tyrosine 295 to leucine 315 threads the bilayer. Residues serine 316–glutamate 318 are Lumenal-facing. Residues leucine 319–leucine 339 form a helical membrane-spanning segment. Residues leucine 340 to glutamine 391 are Cytoplasmic-facing. Residues lysine 354–glutamine 391 are disordered. Basic and acidic residues predominate over residues isoleucine 380 to glutamine 391.

This sequence belongs to the GPC1 family.

The protein resides in the membrane. The catalysed reaction is sn-glycerol 3-phosphocholine + an acyl-CoA = a monoacyl-sn-glycero-3-phosphocholine + CoA. The enzyme catalyses sn-glycero-3-phosphoethanolamine + an acyl-CoA = a monoacyl-sn-glycero-3-phosphoethanolamine + CoA. It catalyses the reaction sn-glycerol 3-phosphocholine + hexadecanoyl-CoA = hexadecanoyl-sn-glycero-3-phosphocholine + CoA. It carries out the reaction (9Z)-hexadecenoyl-CoA + sn-glycerol 3-phosphocholine = (9Z-hexadecenoyl)-sn-glycero-3-phosphocholine + CoA. The catalysed reaction is (9Z,12Z)-octadecadienoyl-CoA + sn-glycerol 3-phosphocholine = (9Z,12Z-octadecadienoyl)-sn-glycero-3-phosphocholine + CoA. The enzyme catalyses (12R)-hydroxy-(9Z)-octadecenoyl-CoA + sn-glycerol 3-phosphocholine = (12R-hydroxy-9Z-octadecenoyl)-sn-glycero-3-phosphocholine + CoA. It catalyses the reaction (9Z,12Z,15Z)-octadecatrienoyl-CoA + sn-glycerol 3-phosphocholine = (9Z,12Z,15Z-octadecatrienoyl)-sn-glycero-3-phosphocholine + CoA. It carries out the reaction sn-glycerol 3-phosphocholine + (9Z)-octadecenoyl-CoA = (9Z-octadecenoyl)-sn-glycero-3-phosphocholine + CoA. Its function is as follows. Glycerophosphocholine acyltransferase (GPCAT) that utilizes acyl-CoA to acylate glycero-3-phosphocholine (GPC), forming lysophosphatidylcholine (LPC). Shows broad acyl specificities with a preference for 16:0-CoA, polyunsaturated acyl-CoA, and the hydroxylated ricinoleoyl-CoA. Also catalyzes the acylation of glycero-3-phosphoethanolamine (GPE) with acyl-CoA. In addition to acyl-CoA, GPCAT efficiently utilizes LPC and lysophosphatidylethanolamine (LPE) as acyl donors in the acylation of GPC. Contributes to the maintenance of phosphatidylcholine (PC) homeostasis and might also have specific functions in acyl editing of PC, such as transferring acyl groups modified at the sn-2 position of PC to the sn-1. The polypeptide is Glycerophosphocholine acyltransferase 1 (Ricinus communis (Castor bean)).